We begin with the raw amino-acid sequence, 86 residues long: Colicin-E9 immunity protein (86 aa).

This sequence belongs to the colicins ColE2/ColE8/ColE9 and pyocins S1/S2 family.

Functionally, this protein is able to protect a cell, which harbors the plasmid ColE9 encoding colicin E9, against colicin E9, it binds specifically to the DNase-type colicin and inhibits its bactericidal activity. The protein is Colicin-E9 immunity protein (imm) of Escherichia coli.